The primary structure comprises 334 residues: Chemotactic signal transduction system substrate-binding protein CosB (334 aa).

An N-terminal signal peptide occupies residues 1–29; that stretch reads MMDTPEHASTSSRRQLLGMLAAGGTTAVA.

Belongs to the OsmX family.

Its subcellular location is the cell membrane. Its function is as follows. Mediates chemotaxis towards compatible osmolytes. May function as a receptor that binds the osmolytes and transduces a signal to CosT. Has probably no additional role in transport. The chain is Chemotactic signal transduction system substrate-binding protein CosB (cosB) from Halobacterium salinarum (strain ATCC 29341 / DSM 671 / R1).